Consider the following 661-residue polypeptide: MKNLCKISDDYLNSKLKYLKLLSKQYPSISKASTEIINLEAILNLPKGTEHFITDVHGEYEPFVHVLKNGSGVIKRKIEELFSNTIRDSEKKMLATLVYYPEQKLDLIIKQEENIDDFYRINIYRLIELCKYASSKYTRSKVRKLLPENFKYIIEELLHEHVKSEHKEEYYKSIVETIVDIGIAKEFIIAISTVIQKLVVDRLHVIGDIYDRGPRPDIIVDKLIEHHCVDIQWGNHDILWMGAASGEKTCIANALRISARYANLDIVEDIYGINLLPLATFAIEMYKDDPCKEFIPKVNDQSVTTTEKSLMAKMHKAISIIQFKLEGEVIRRRPEFEMEHRLLLNMINYDEGTINLKGKTYKLKDTYLPTIDKKDPYKLTMEERNVIDKLVSSFRGSEKLQKHVSFLFSKGSIYLKANSNLLIHGCVPLNEDGSFMSMNIMGKEYKGKALMDKMESLAREGFFFKDKAEEKLYGMDIMWYLWTGKCSSLFGKDDMTTFERYFIAEKETHKENKNPYFKLRENEMACKRLFEEFDLELDESHIINGHVPVESKNGESPIKANGKILVIDGGFSRAYQKTTGIAGYTLIYNSRTLQLVSHEPFNSAEEAIANESDILSTTVVVEHKAKRKMVRDTDEGIKIQEEIEDLKLLLMAYKKGLIKEM.

It belongs to the FBPase class 3 family. The cofactor is Mn(2+).

The catalysed reaction is beta-D-fructose 1,6-bisphosphate + H2O = beta-D-fructose 6-phosphate + phosphate. It participates in carbohydrate biosynthesis; gluconeogenesis. In Clostridioides difficile (strain 630) (Peptoclostridium difficile), this protein is Fructose-1,6-bisphosphatase class 3.